A 122-amino-acid chain; its full sequence is Large ribosomal subunit protein uL14c (122 aa).

It belongs to the universal ribosomal protein uL14 family. In terms of assembly, part of the 50S ribosomal subunit.

Its subcellular location is the plastid. The protein resides in the chloroplast. Its function is as follows. Binds to 23S rRNA. The sequence is that of Large ribosomal subunit protein uL14c from Nicotiana sylvestris (Wood tobacco).